Here is a 505-residue protein sequence, read N- to C-terminus: Mannosyl-oligosaccharide alpha-1,2-mannosidase 1B (505 aa).

Positions 1 to 16 (MRTLLALAALAGFAAA) are cleaved as a signal peptide. N-linked (GlcNAc...) asparagine glycans are attached at residues N88 and N174. The cysteines at positions 325 and 354 are disulfide-linked. A glycan (N-linked (GlcNAc...) asparagine) is linked at N359. The active-site Proton donor is E368. T494 provides a ligand contact to Ca(2+).

It belongs to the glycosyl hydrolase 47 family. Monomer. Ca(2+) serves as cofactor. It depends on Mg(2+) as a cofactor.

It localises to the cytoplasmic vesicle lumen. It carries out the reaction N(4)-(alpha-D-Man-(1-&gt;2)-alpha-D-Man-(1-&gt;2)-alpha-D-Man-(1-&gt;3)-[alpha-D-Man-(1-&gt;2)-alpha-D-Man-(1-&gt;3)-[alpha-D-Man-(1-&gt;2)-alpha-D-Man-(1-&gt;6)]-alpha-D-Man-(1-&gt;6)]-beta-D-Man-(1-&gt;4)-beta-D-GlcNAc-(1-&gt;4)-beta-D-GlcNAc)-L-asparaginyl-[protein] (N-glucan mannose isomer 9A1,2,3B1,2,3) + 4 H2O = N(4)-(alpha-D-Man-(1-&gt;3)-[alpha-D-Man-(1-&gt;3)-[alpha-D-Man-(1-&gt;6)]-alpha-D-Man-(1-&gt;6)]-beta-D-Man-(1-&gt;4)-beta-D-GlcNAc-(1-&gt;4)-beta-D-GlcNAc)-L-asparaginyl-[protein] (N-glucan mannose isomer 5A1,2) + 4 beta-D-mannose. The enzyme catalyses N(4)-(alpha-D-Man-(1-&gt;2)-alpha-D-Man-(1-&gt;2)-alpha-D-Man-(1-&gt;3)-[alpha-D-Man-(1-&gt;3)-[alpha-D-Man-(1-&gt;2)-alpha-D-Man-(1-&gt;6)]-alpha-D-Man-(1-&gt;6)]-beta-D-Man-(1-&gt;4)-beta-D-GlcNAc-(1-&gt;4)-beta-D-GlcNAc)-L-asparaginyl-[protein] (N-glucan mannose isomer 8A1,2,3B1,3) + 3 H2O = N(4)-(alpha-D-Man-(1-&gt;3)-[alpha-D-Man-(1-&gt;3)-[alpha-D-Man-(1-&gt;6)]-alpha-D-Man-(1-&gt;6)]-beta-D-Man-(1-&gt;4)-beta-D-GlcNAc-(1-&gt;4)-beta-D-GlcNAc)-L-asparaginyl-[protein] (N-glucan mannose isomer 5A1,2) + 3 beta-D-mannose. Its pathway is protein modification; protein glycosylation. Its function is as follows. Involved in the maturation of Asn-linked oligosaccharides. Progressively trims alpha-1,2-linked mannose residues from Man(9)GlcNAc(2) to produce Man(5)GlcNAc(2). The protein is Mannosyl-oligosaccharide alpha-1,2-mannosidase 1B (mns1B) of Emericella nidulans (strain FGSC A4 / ATCC 38163 / CBS 112.46 / NRRL 194 / M139) (Aspergillus nidulans).